A 305-amino-acid chain; its full sequence is Aspartate carbamoyltransferase catalytic subunit (305 aa).

The carbamoyl phosphate site is built by arginine 54 and threonine 55. Lysine 82 contributes to the L-aspartate binding site. 3 residues coordinate carbamoyl phosphate: arginine 104, histidine 132, and glutamine 135. Residues arginine 165 and arginine 218 each contribute to the L-aspartate site. The carbamoyl phosphate site is built by glycine 259 and proline 260.

The protein belongs to the aspartate/ornithine carbamoyltransferase superfamily. ATCase family. Heterododecamer (2C3:3R2) of six catalytic PyrB chains organized as two trimers (C3), and six regulatory PyrI chains organized as three dimers (R2).

It carries out the reaction carbamoyl phosphate + L-aspartate = N-carbamoyl-L-aspartate + phosphate + H(+). Its pathway is pyrimidine metabolism; UMP biosynthesis via de novo pathway; (S)-dihydroorotate from bicarbonate: step 2/3. Its function is as follows. Catalyzes the condensation of carbamoyl phosphate and aspartate to form carbamoyl aspartate and inorganic phosphate, the committed step in the de novo pyrimidine nucleotide biosynthesis pathway. The polypeptide is Aspartate carbamoyltransferase catalytic subunit (Caldicellulosiruptor bescii (strain ATCC BAA-1888 / DSM 6725 / KCTC 15123 / Z-1320) (Anaerocellum thermophilum)).